Here is a 123-residue protein sequence, read N- to C-terminus: Protein Wnt-3a (123 aa).

S1 is lipidated: O-palmitoleoyl serine. Cysteines 89 and 104 form a disulfide. N-linked (GlcNAc...) asparagine glycosylation is present at N90.

Belongs to the Wnt family. Post-translationally, disulfide bonds have critical and distinct roles in secretion and activity. Loss of each conserved cysteine results in high molecular weight oxidized Wnt oligomers, which are formed through inter-Wnt disulfide bonding. Palmitoleoylation is required for efficient binding to frizzled receptors. Depalmitoleoylation leads to Wnt signaling pathway inhibition.

The protein localises to the secreted. Its subcellular location is the extracellular space. It localises to the extracellular matrix. Ligand for members of the frizzled family of seven transmembrane receptors. Functions in the canonical Wnt signaling pathway that results in activation of transcription factors of the TCF/LEF family. Required for normal embryonic mesoderm development and formation of caudal somites. Required for normal morphogenesis of the developing neural tube. In Alopias vulpinus (Common thresher shark), this protein is Protein Wnt-3a (WNT-3A).